Here is a 122-residue protein sequence, read N- to C-terminus: MSKKRSSPNRNVQIADQIQRDLSELIMREVKDPRIGIVTIQSVELTPDYAHAKVYFTALTGNPADTQEALNHAAGHLHNLLFKRLHIHTVPTLHFHYDQTIEKAVAMSRLIDEANATRAKDD.

It belongs to the RbfA family. As to quaternary structure, monomer. Binds 30S ribosomal subunits, but not 50S ribosomal subunits or 70S ribosomes.

Its subcellular location is the cytoplasm. Its function is as follows. One of several proteins that assist in the late maturation steps of the functional core of the 30S ribosomal subunit. Associates with free 30S ribosomal subunits (but not with 30S subunits that are part of 70S ribosomes or polysomes). Required for efficient processing of 16S rRNA. May interact with the 5'-terminal helix region of 16S rRNA. This Burkholderia thailandensis (strain ATCC 700388 / DSM 13276 / CCUG 48851 / CIP 106301 / E264) protein is Ribosome-binding factor A.